Here is a 341-residue protein sequence, read N- to C-terminus: Retinol dehydrogenase 10 (341 aa).

A helical; Signal-anchor membrane pass occupies residues 3–23; it reads IVLEFFLVTFKVLWAFVLAAA. 40-64 provides a ligand contact to NADP(+); it reads LITGAGSGLGRLFALEFARRRAQLV. Residue S197 coordinates substrate. The active-site Proton acceptor is the Y210.

This sequence belongs to the short-chain dehydrogenases/reductases (SDR) family.

Its subcellular location is the microsome membrane. The protein localises to the endoplasmic reticulum membrane. The enzyme catalyses all-trans-retinol + NADP(+) = all-trans-retinal + NADPH + H(+). The protein operates within cofactor metabolism; retinol metabolism. Its function is as follows. Retinol dehydrogenase with a clear preference for NADP. Converts all-trans-retinol to all-trans-retinal. Has no detectable activity towards 11-cis-retinol, 9-cis-retinol and 13-cis-retinol. The sequence is that of Retinol dehydrogenase 10 (rdh10) from Xenopus tropicalis (Western clawed frog).